Reading from the N-terminus, the 242-residue chain is Uridylate kinase (242 aa).

17 to 20 (KLSG) is an ATP binding site. Gly59 lines the UMP pocket. ATP is bound by residues Gly60 and Arg64. Residues Asp79 and 140-147 (TGNPFFTT) each bind UMP. The ATP site is built by Thr167, Tyr173, and Asp176.

The protein belongs to the UMP kinase family. Homohexamer.

The protein resides in the cytoplasm. It catalyses the reaction UMP + ATP = UDP + ADP. The protein operates within pyrimidine metabolism; CTP biosynthesis via de novo pathway; UDP from UMP (UMPK route): step 1/1. Its activity is regulated as follows. Inhibited by UTP. Its function is as follows. Catalyzes the reversible phosphorylation of UMP to UDP. The sequence is that of Uridylate kinase from Marinobacter nauticus (strain ATCC 700491 / DSM 11845 / VT8) (Marinobacter aquaeolei).